The primary structure comprises 427 residues: MGSVRTNRYSIVSSEEDGMKLATMAVANGFGNGKSKVHTRQQCRSRFVKKDGHCNVQFINVGEKGQRYLADIFTTCVDIRWRWMLVIFCLAFVLSWLFFGCVFWLIALLHGDLDASKESKACVSEVNSFTAAFLFSIETQTTIGYGFRCVTDECPIAVFMVVFQSIVGCIIDAFIIGAVMAKMAKPKKRNETLVFSHNAVIAMRDGKLCLMWRVGNLRKSHLVEAHVRAQLLKSRITSEGEYIPLDQIDINVGFDSGIDRIFLVSPITIVHEIDEDSPLYDLSKQDIDNADFEIVVILEGMVEATAMTTQCRSSYLANEILWGHRYEPVLFEEKHYYKVDYSRFHKTYEVPNTPLCSARDLAEKKYILSNANSFCYENEVALTSKEEDDSENGVPESTSTDTPPDIDLHNQASVPLEPRPLRRESEI.

Residues 1-81 (MGSVRTNRYS…IFTTCVDIRW (81 aa)) are Cytoplasmic-facing. C76 is modified (S-nitrosocysteine). Residues 82–106 (RWMLVIFCLAFVLSWLFFGCVFWLI) traverse the membrane as a helical segment. The Extracellular portion of the chain corresponds to 107–128 (ALLHGDLDASKESKACVSEVNS). The segment at residues 129-140 (FTAAFLFSIETQ) is an intramembrane region (helical; Pore-forming). Residues 141-147 (TTIGYGF) constitute an intramembrane region (pore-forming). The Selectivity filter motif lies at 142-147 (TIGYGF). The Extracellular segment spans residues 148–156 (RCVTDECPI). Residues 157-178 (AVFMVVFQSIVGCIIDAFIIGA) form a helical membrane-spanning segment. The Cytoplasmic segment spans residues 179–427 (VMAKMAKPKK…PRPLRRESEI (249 aa)). Positions 181 to 208 (AKMAKPKKRNETLVFSHNAVIAMRDGKL) are polyphosphoinositide (PIP2)-binding. The disordered stretch occupies residues 384-427 (SKEEDDSENGVPESTSTDTPPDIDLHNQASVPLEPRPLRRESEI). Positions 425-427 (SEI) match the PDZ-binding motif.

This sequence belongs to the inward rectifier-type potassium channel (TC 1.A.2.1) family. KCNJ2 subfamily. Homotetramer. Homomultimeric and heteromultimeric association with KCNJ4/Kir2.3. Can form heteromeric channels with Kir2.6/KCNJ18. Associates, via its PDZ-recognition domain, with a complex containing LIN7A, LIN7B, LIN7C, DLG1, CASK and APBA1. In terms of processing, S-nitrosylation increases the open probability and inward rectifying currents.

The protein localises to the cell membrane. The protein resides in the sarcolemma. It localises to the T-tubule. It catalyses the reaction K(+)(in) = K(+)(out). With respect to regulation, activated by phosphatidylinositol 4,5 biphosphate (PtdIns(4,5)P2). Inward rectifier potassium channels are characterized by a greater tendency to allow potassium to flow into the cell rather than out of it. Their voltage dependence is regulated by the concentration of extracellular potassium; as external potassium is raised, the voltage range of the channel opening shifts to more positive voltages. The inward rectification is mainly due to the blockage of outward current by internal magnesium. Blocked by external barium or cesium. Probably participates in establishing action potential waveform and excitability of neuronal and muscle tissues. In Cavia porcellus (Guinea pig), this protein is Inward rectifier potassium channel 2 (KCNJ2).